A 148-amino-acid chain; its full sequence is Large ribosomal subunit protein bL9 (148 aa).

It belongs to the bacterial ribosomal protein bL9 family.

In terms of biological role, binds to the 23S rRNA. The polypeptide is Large ribosomal subunit protein bL9 (Agathobacter rectalis (strain ATCC 33656 / DSM 3377 / JCM 17463 / KCTC 5835 / VPI 0990) (Eubacterium rectale)).